The primary structure comprises 599 residues: Kelch-like protein 41a (599 aa).

One can recognise a BTB domain in the interval 32-102; it reads VDCILKVGDR…LYSADIDITD (71 aa). In terms of domain architecture, BACK spans 137–239; that stretch reads CLAIFRMGLV…PEKYLKEKVE (103 aa). 5 Kelch repeats span residues 339–391, 393–440, 441–488, 489–535, and 537–591; these read LLYV…EFEN, LFAV…SQNG, LVYC…VHKG, KIVV…SVDG, and LYAV…SMRL.

It localises to the cytoplasm. Its subcellular location is the cytoskeleton. The protein resides in the sarcoplasmic reticulum membrane. It is found in the endoplasmic reticulum membrane. Involved in skeletal muscle development and differentiation. This chain is Kelch-like protein 41a (klhl41a), found in Danio rerio (Zebrafish).